Consider the following 623-residue polypeptide: uncharacterized protein (623 aa).

Positions 157–166 are enriched in basic and acidic residues; that stretch reads LNESPLRDQQ. The interval 157–237 is disordered; that stretch reads LNESPLRDQQ…QGLPDHNNSI (81 aa). Polar residues predominate over residues 167 to 177; sequence ESSTPSKNSTL. Residues 193–210 show a composition bias toward low complexity; that stretch reads AFRPLPSPSRRSSQSAPA.

This is an uncharacterized protein from Macaca fascicularis (Crab-eating macaque).